Here is a 159-residue protein sequence, read N- to C-terminus: Endoribonuclease YbeY (159 aa).

His125, His129, and His135 together coordinate Zn(2+).

Belongs to the endoribonuclease YbeY family. Zn(2+) is required as a cofactor.

The protein resides in the cytoplasm. In terms of biological role, single strand-specific metallo-endoribonuclease involved in late-stage 70S ribosome quality control and in maturation of the 3' terminus of the 16S rRNA. This chain is Endoribonuclease YbeY, found in Brevibacillus brevis (strain 47 / JCM 6285 / NBRC 100599).